We begin with the raw amino-acid sequence, 204 residues long: MGLIVDDDNDGEVLIPPPNFSMVEDEIYRSGFPELENFGFLSTLNLRSIIYLCPEPYPEDNLKSLASNNIKLFQFGIEGKTDPPTPMPKDTVLSALRVLVDVRNHPILIHCKRGKHRTGCLVGCLRKVQNWCLSSVLEEYQKCAGLKWRQRDLRFIEDFDVLRLKQCLYSIIYQYNGYGLKRRKLLYQEENVVQEQQKPQATKG.

Positions 19–168 (NFSMVEDEIY…FDVLRLKQCL (150 aa)) constitute a Tyrosine-protein phosphatase domain. The segment at 75–87 (FGIEGKTDPPTPM) is WPD loop important for active site topology. Cys111 serves as the catalytic Phosphocysteine intermediate.

The protein belongs to the protein-tyrosine phosphatase family. Atypical dual-specificity phosphatase Siw14-like subfamily. Highly expressed in flowers. Expressed at low levels in roots, leaves, stems and siliques.

The enzyme catalyses 5-diphospho-1D-myo-inositol 1,2,3,4,6-pentakisphosphate + H2O = 1D-myo-inositol hexakisphosphate + phosphate + H(+). The catalysed reaction is 1,5-bis(diphospho)-1D-myo-inositol 2,3,4,6-tetrakisphosphate + H2O = 1-diphospho-1D-myo-inositol 2,3,4,5,6-pentakisphosphate + phosphate + 2 H(+). It catalyses the reaction 3,5-bis(diphospho)-1D-myo-inositol 1,2,4,6-tetrakisphosphate + H2O = 3-diphospho-1D-myo-inositol 1,2,4,5,6-pentakisphosphate + phosphate + 2 H(+). It carries out the reaction 6-diphospho-1D-myo-inositol pentakisphosphate + H2O = 1D-myo-inositol hexakisphosphate + phosphate + H(+). Cleaves the beta-phosphate at the 5-position of soluble inositol pyrophosphates. Has highest activity on 5-diphosphoinositol 1,2,3,4,6-pentakisphosphate (5-InsP(7)). Possesses low phosphotyrosine phosphatase activity in vitro. Dephosphorylates the phosphoinositides PI(3,5)P2. Hydrolyzes O-methylfluorescein phosphate in vitro. This is Inositol diphosphatase DSP5 from Arabidopsis thaliana (Mouse-ear cress).